The primary structure comprises 142 residues: Pro-opiomelanocortin (142 aa).

Positions Ser1–Gly8 are excised as a propeptide. Residue Val23 is modified to Valine amide. The residue at position 41 (Ser41) is a Phosphoserine.

It belongs to the POMC family. Specific enzymatic cleavages at paired basic residues yield the different active peptides. In terms of tissue distribution, ACTH and MSH are produced by the pituitary gland.

The protein localises to the secreted. Functionally, stimulates the adrenal glands to release cortisol. Its function is as follows. Anorexigenic peptide. Increases the pigmentation of skin by increasing melanin production in melanocytes. Increases the pigmentation of skin by increasing melanin production in melanocytes. In terms of biological role, endogenous orexigenic opiate. Functionally, endogenous opiate. The sequence is that of Pro-opiomelanocortin (POMC) from Neovison vison (American mink).